The following is a 256-amino-acid chain: Chalcone--flavanone isomerase (256 aa).

Substrate-binding residues include Thr-51, Asn-116, and Ser-193. The segment at 219-256 is disordered; that stretch reads NSTTDLNESENEKLNSNEVSKEEKPLQVEKSAFKEVEV. Positions 228 to 256 are enriched in basic and acidic residues; the sequence is ENEKLNSNEVSKEEKPLQVEKSAFKEVEV.

This sequence belongs to the chalcone isomerase family. In terms of tissue distribution, nodules.

It carries out the reaction a chalcone = a flavanone.. It participates in secondary metabolite biosynthesis; flavonoid biosynthesis. Its function is as follows. Catalyzes the intramolecular cyclization of bicyclic chalcones into tricyclic (S)-flavanones. Responsible for the isomerization of 4,2',4',6'-tetrahydroxychalcone (also termed chalcone) into naringenin. The protein is Chalcone--flavanone isomerase (CHI) of Elaeagnus umbellata (Autumn olive).